Consider the following 150-residue polypeptide: Transcription antitermination protein NusB (150 aa).

This sequence belongs to the NusB family.

Its function is as follows. Involved in transcription antitermination. Required for transcription of ribosomal RNA (rRNA) genes. Binds specifically to the boxA antiterminator sequence of the ribosomal RNA (rrn) operons. This Saccharophagus degradans (strain 2-40 / ATCC 43961 / DSM 17024) protein is Transcription antitermination protein NusB.